Consider the following 455-residue polypeptide: Serine incorporator 2 (455 aa).

11 consecutive transmembrane segments (helical) span residues L5 to S27, L40 to L57, A96 to V118, G131 to I150, F160 to A182, Y202 to F224, F239 to L256, L268 to P290, Q317 to L339, T385 to T407, and W422 to V444.

Belongs to the TDE1 family.

Its subcellular location is the cell membrane. It catalyses the reaction a 1,2-diacyl-sn-glycero-3-phospho-L-serine(in) = a 1,2-diacyl-sn-glycero-3-phospho-L-serine(out). The enzyme catalyses a 1,2-diacyl-sn-glycero-3-phosphocholine(in) = a 1,2-diacyl-sn-glycero-3-phosphocholine(out). It carries out the reaction a 1,2-diacyl-sn-glycero-3-phosphoethanolamine(in) = a 1,2-diacyl-sn-glycero-3-phosphoethanolamine(out). Non-ATP-dependent, non-specific lipid transporter for phosphatidylserine, phosphatidylcholine, and phosphatidylethanolamine. Functions as a scramblase that flips lipids in both directions across the membrane. In contrast to SERINC3 and SERINC5, has no effect on HIV-1 particles infectivity. The sequence is that of Serine incorporator 2 from Homo sapiens (Human).